The primary structure comprises 586 residues: Probable zinc metalloprotease EGY3, chloroplastic (586 aa).

The N-terminal 54 residues, 1 to 54 (MASSSLVTSLLFSSSSSSNTATSTSSRRSFSLFSKNQYCKPRPLRRSSSRLLVR), are a transit peptide targeting the chloroplast. 2 disordered regions span residues 13–32 (SSSS…SFSL) and 58–122 (QQQQ…DWRS). Over residues 61–73 (QEEKAAPAAESHH) the composition is skewed to basic and acidic residues. Residues 103–195 (VKKSKEELEE…NTFKALDLNK (93 aa)) are a coiled coil. 7 helical membrane-spanning segments follow: residues 287-307 (LSAV…SGFF), 318-338 (VSDV…SEIA), 389-409 (ASAY…DGSL), 427-447 (PLLS…GNVL), 454-474 (VGVP…VTSL), 506-526 (VALG…WGLF), and 550-570 (YAWG…NGGG).

This sequence belongs to the peptidase M50B family.

It localises to the plastid. The protein localises to the chloroplast membrane. Probable membrane-associated metalloprotease that may be involved in chloroplast development. This is Probable zinc metalloprotease EGY3, chloroplastic (EGY3) from Oryza sativa subsp. japonica (Rice).